The sequence spans 130 residues: Methylglyoxal synthase (130 aa).

The MGS-like domain maps to 1-130 (MSKPRIALIA…DLARNMQDVC (130 aa)). Residues His-11, Lys-15, 37 to 40 (TGTT), and 57 to 58 (SG) contribute to the substrate site. Asp-63 (proton donor/acceptor) is an active-site residue. Substrate is bound at residue His-90.

It belongs to the methylglyoxal synthase family.

It carries out the reaction dihydroxyacetone phosphate = methylglyoxal + phosphate. Its function is as follows. Catalyzes the formation of methylglyoxal from dihydroxyacetone phosphate. The sequence is that of Methylglyoxal synthase from Burkholderia cenocepacia (strain HI2424).